The sequence spans 396 residues: Squamosa promoter-binding-like protein 10 (396 aa).

A disordered region spans residues 74 to 104; it reads QSTSINSSSPEDKRCNLASQSSPGDSSSNID. A compositionally biased stretch (polar residues) spans 90 to 104; that stretch reads LASQSSPGDSSSNID. The SBP-type zinc-finger motif lies at 173–250; that stretch reads VPRCQIDGCE…SHHNARRRKP (78 aa). Zn(2+)-binding residues include Cys-176, Cys-181, Cys-198, His-201, Cys-217, Cys-220, His-224, and Cys-236. The Bipartite nuclear localization signal signature appears at 233-249; the sequence is KRSCRKRLSHHNARRRK.

It depends on Zn(2+) as a cofactor.

Its subcellular location is the nucleus. In terms of biological role, trans-acting factor that binds specifically to the consensus nucleotide sequence 5'-TNCGTACAA-3'. The polypeptide is Squamosa promoter-binding-like protein 10 (SPL10) (Arabidopsis thaliana (Mouse-ear cress)).